A 435-amino-acid chain; its full sequence is MIKNSITNKLYVEAKKIIPGGVNSPARSFYFVKEIPVIAKRSKGPYIFDVDNNKYIDYICSWGASILGHNNYYITSKIIEYSKKGLNFGLLTEIEIKIARLISKYIPSIEMIRMVNSGTEATMSAIRLARSYTKKNKIIKFDGCYHGHADFLLANSNLDPYDLFSSNPISSGIPKNILKDTLICPYNDYESIEKIFDLYPNKIACIIVEPIAGNMGCVLPEKNFLYKLRMLCNKFNSLLIMDEIITGFRISLGGAQSYYNIYPDITCLGKIIGGGLPIGAFGGKKRIMNHVSPSGSVYQAGTFSGNPISMISGYACLKLLKSPDLYNKLNKKTEYLVNELRSSACDNKIPVVINSLGSMFSIFFTNLDKIKCYKDVSSCNYKKFILFFNEIKKLGILFSPSLFESNFITLMHKKKDLEKTIDSANKVFKILKNKV.

K270 carries the N6-(pyridoxal phosphate)lysine modification.

This sequence belongs to the class-III pyridoxal-phosphate-dependent aminotransferase family. HemL subfamily. In terms of assembly, homodimer. Pyridoxal 5'-phosphate serves as cofactor.

Its subcellular location is the cytoplasm. It catalyses the reaction (S)-4-amino-5-oxopentanoate = 5-aminolevulinate. It participates in porphyrin-containing compound metabolism; protoporphyrin-IX biosynthesis; 5-aminolevulinate from L-glutamyl-tRNA(Glu): step 2/2. This chain is Glutamate-1-semialdehyde 2,1-aminomutase, found in Wigglesworthia glossinidia brevipalpis.